Here is a 314-residue protein sequence, read N- to C-terminus: Methionyl-tRNA formyltransferase (314 aa).

111-114 (SLLP) serves as a coordination point for (6S)-5,6,7,8-tetrahydrofolate.

It belongs to the Fmt family.

The enzyme catalyses L-methionyl-tRNA(fMet) + (6R)-10-formyltetrahydrofolate = N-formyl-L-methionyl-tRNA(fMet) + (6S)-5,6,7,8-tetrahydrofolate + H(+). Attaches a formyl group to the free amino group of methionyl-tRNA(fMet). The formyl group appears to play a dual role in the initiator identity of N-formylmethionyl-tRNA by promoting its recognition by IF2 and preventing the misappropriation of this tRNA by the elongation apparatus. The chain is Methionyl-tRNA formyltransferase from Chlorobium luteolum (strain DSM 273 / BCRC 81028 / 2530) (Pelodictyon luteolum).